Consider the following 689-residue polypeptide: Glycine--tRNA ligase beta subunit (689 aa).

Belongs to the class-II aminoacyl-tRNA synthetase family. As to quaternary structure, tetramer of two alpha and two beta subunits.

The protein localises to the cytoplasm. It catalyses the reaction tRNA(Gly) + glycine + ATP = glycyl-tRNA(Gly) + AMP + diphosphate. The sequence is that of Glycine--tRNA ligase beta subunit from Klebsiella pneumoniae subsp. pneumoniae (strain ATCC 700721 / MGH 78578).